The primary structure comprises 651 residues: DNA topoisomerase 3 (651 aa).

Positions 1 to 134 constitute a Toprim domain; that stretch reads MRLFIAEKPS…KRDKILRCLI (134 aa). The Mg(2+) site is built by glutamate 7, aspartate 103, and aspartate 105. In terms of domain architecture, Topo IA-type catalytic spans 155–612; sequence FIPLATSALA…NLNQILPDLV (458 aa). An interaction with DNA region spans residues 194-199; that stretch reads SVGRVQ. The O-(5'-phospho-DNA)-tyrosine intermediate role is filled by tyrosine 337. A disordered region spans residues 631–651; sequence SDRAKPKSAVKKSSKSNGETD.

It belongs to the type IA topoisomerase family. The cofactor is Mg(2+).

The catalysed reaction is ATP-independent breakage of single-stranded DNA, followed by passage and rejoining.. Functionally, releases the supercoiling and torsional tension of DNA, which is introduced during the DNA replication and transcription, by transiently cleaving and rejoining one strand of the DNA duplex. Introduces a single-strand break via transesterification at a target site in duplex DNA. The scissile phosphodiester is attacked by the catalytic tyrosine of the enzyme, resulting in the formation of a DNA-(5'-phosphotyrosyl)-enzyme intermediate and the expulsion of a 3'-OH DNA strand. The free DNA strand then undergoes passage around the unbroken strand, thus removing DNA supercoils. Finally, in the religation step, the DNA 3'-OH attacks the covalent intermediate to expel the active-site tyrosine and restore the DNA phosphodiester backbone. The protein is DNA topoisomerase 3 of Haemophilus influenzae (strain ATCC 51907 / DSM 11121 / KW20 / Rd).